The primary structure comprises 558 residues: 5-aminolevulinate synthase, mitochondrial (558 aa).

A mitochondrion-targeting transit peptide spans 1-25 (MERVVKLAAKHCPFVSKADPSALRR). The segment at 103-124 (TTTPVTKKHQMPKHYASDLNGV) is disordered. The substrate site is built by Arg152, Ser265, and Lys284. Pyridoxal 5'-phosphate-binding residues include Ser317, His345, and Thr374. Residue Lys377 is part of the active site. Lys377 is modified (N6-(pyridoxal phosphate)lysine). 2 residues coordinate pyridoxal 5'-phosphate: Thr406 and Thr407. Thr492 serves as a coordination point for substrate.

This sequence belongs to the class-II pyridoxal-phosphate-dependent aminotransferase family. In terms of assembly, homodimer. It depends on pyridoxal 5'-phosphate as a cofactor.

It is found in the mitochondrion matrix. The catalysed reaction is succinyl-CoA + glycine + H(+) = 5-aminolevulinate + CO2 + CoA. Its pathway is porphyrin-containing compound metabolism; protoporphyrin-IX biosynthesis; 5-aminolevulinate from glycine: step 1/1. Catalyzes the synthesis of 5-aminolevulinate (ALA) from succinyl-CoA and glycine, the first and rate-limiting step in heme biosynthesis. This is 5-aminolevulinate synthase, mitochondrial from Schizosaccharomyces pombe (strain 972 / ATCC 24843) (Fission yeast).